A 323-amino-acid chain; its full sequence is MGFERGGRGGARGGGRGGFGGDRGGRGGARGGSRGGFGGGRGGGAPRGRGGPRGGGRGGATRGRGGARGGAKGGAAGKKVIVEPHRHKGVFVARGGKEDLLATVNLVPGESVYGEKRISVENASKEEGGASTKTEYRIWNPFRSKLAAGILGGLETIYMKPGSKVLYLGAASGTSVSHVADIVGPTGSVYAVEFSHRSGRDLINMATRRTNVIPIVEDARKPMAYRMLLPMVDVIFADVAQPDQARIVGINAKLFLKQGGGLLISIKASCIDSTAPPEQVFASEVQKLREDKFFPKEQLTLEPYERDHAMVSCVYQQKEFVDN.

A disordered region spans residues 1–80 (MGFERGGRGG…AKGGAAGKKV (80 aa)). R5, R8, R12, R16, R23, R26, R30, R34, R41, R47, R49, R53, R57, R62, R64, and R68 each carry asymmetric dimethylarginine. The segment covering 8–76 (RGGARGGGRG…ARGGAKGGAA (69 aa)) has biased composition (gly residues). S-adenosyl-L-methionine-binding positions include 174–175 (TS), 193–194 (EF), 218–219 (DA), and 238–241 (DVAQ).

The protein belongs to the methyltransferase superfamily. Fibrillarin family. Component of box C/D small nucleolar ribonucleoprotein (snoRNP) particles. By homology to other fibrillarins, some or all of the N-terminal domain arginines are modified to asymmetric dimethylarginine (DMA).

The protein localises to the nucleus. It localises to the nucleolus. It catalyses the reaction L-glutaminyl-[histone H2A] + S-adenosyl-L-methionine = N(5)-methyl-L-glutaminyl-[histone H2A] + S-adenosyl-L-homocysteine + H(+). S-adenosyl-L-methionine-dependent methyltransferase that has the ability to methylate both RNAs and proteins. Involved in pre-rRNA processing. Utilizes the methyl donor S-adenosyl-L-methionine to catalyze the site-specific 2'-hydroxyl methylation of ribose moieties in pre-ribosomal RNA. Site specificity is provided by a guide RNA that base pairs with the substrate. Methylation occurs at a characteristic distance from the sequence involved in base pairing with the guide RNA. Also acts as a protein methyltransferase by mediating methylation of 'Gln-105' of histone H2A (H2AQ105me), a modification that impairs binding of the FACT complex and is specifically present at 35S ribosomal DNA locus. The chain is rRNA 2'-O-methyltransferase fibrillarin (nop-1) from Neurospora crassa (strain ATCC 24698 / 74-OR23-1A / CBS 708.71 / DSM 1257 / FGSC 987).